The following is an 86-amino-acid chain: Small ribosomal subunit protein bS16 (86 aa).

The protein belongs to the bacterial ribosomal protein bS16 family.

This Myxococcus xanthus (strain DK1622) protein is Small ribosomal subunit protein bS16.